Reading from the N-terminus, the 155-residue chain is Endoribonuclease YbeY (155 aa).

The tract at residues 64-84 is disordered; it reads SFPMDEMRAPGDDEDPPSGLL. Positions 115, 119, and 125 each coordinate Zn(2+).

Belongs to the endoribonuclease YbeY family. The cofactor is Zn(2+).

It localises to the cytoplasm. Single strand-specific metallo-endoribonuclease involved in late-stage 70S ribosome quality control and in maturation of the 3' terminus of the 16S rRNA. This is Endoribonuclease YbeY from Cutibacterium acnes (strain DSM 16379 / KPA171202) (Propionibacterium acnes).